We begin with the raw amino-acid sequence, 478 residues long: Ribosome biogenesis protein NOP53 (478 aa).

Positions 1–10 are enriched in gly residues; sequence MAAGGSGVGG. The segment at 1 to 51 is disordered; it reads MAAGGSGVGGKRSSKSDADSGFLGLRPTSVDPALRRRRRGPRNKKRGWRRL. At Ala2 the chain carries N-acetylalanine. Ser29 bears the Phosphoserine mark. Over residues 35–49 the composition is skewed to basic residues; the sequence is RRRRRGPRNKKRGWR. Residues Ser93 and Ser305 each carry the phosphoserine modification. Residues 148–431 form a mediates interaction with CDKN2A/isoform tumor suppressor ARF region; it reads KEQLWEKLAK…SELTDSLRTL (284 aa). The tract at residues 181-478 is mediates interaction with NF2; it reads KPGPQDTVER…EKRAFREIQL (298 aa). Residues 303 to 344 form a disordered region; the sequence is EESDGEGEPGQGEGPEAGDAEVCPTPARLATTEKKTEQQRRR. A compositionally biased stretch (basic and acidic residues) spans 333-342; sequence TTEKKTEQQR. The tract at residues 342 to 386 is mediates interaction with human herpesvirus 8 protein ORF16; the sequence is RRREKAVHRLRVQQAALRAARLRHQELFRLRGIKAQVALRLAELA. 2 nucleolar localization signal regions span residues 347-395 and 396-478; these read AVHR…RQAR and REAE…EIQL.

It belongs to the NOP53 family. In terms of assembly, homooligomer. Interacts with PTEN; regulates PTEN phosphorylation and increases its stability. Interacts with RPL11; retains RPL11 into the nucleolus. Interacts with CDKN2A/isoform tumor suppressor ARF; the interaction is direct and promotes ARF nucleoplasmic relocalization and ubiquitin-mediated proteasomal degradation. Interacts with NPM1; the interaction is direct and competitive with MYC. Interacts with NF2 (via FERM domain); the interaction is direct. Interacts with p53/TP53 (via the oligomerization region); the interaction is direct and may prevent the MDM2-mediated proteasomal degradation of p53/TP53. Interacts with RIGI; may regulate RIGI through USP15-mediated 'Lys-63'-linked deubiquitination. Interacts with UBTF. As to quaternary structure, (Microbial infection) Interacts with herpes simplex virus 1 early proteins ICP22 and ICP0. (Microbial infection) Interacts with Human herpesvirus 8 protein ORF16; may sequester ORF16 in host nucleolus and reduce its antiapoptotic activity. Post-translationally, ubiquitin-mediated proteasomal degradation is regulated by c-JUN. It is associated with relocalization to the nucleoplasm and decreased homooligomerization. Phosphorylated upon DNA damage probably by ATM and DNA-PK; may regulate NOP53 degradation. Expressed at high levels in heart and pancreas, moderate levels in placenta, liver, skeletal muscle, and kidney, and low levels in brain and lung.

The protein localises to the nucleus. It localises to the nucleolus. Its subcellular location is the nucleoplasm. In terms of biological role, nucleolar protein which is involved in the integration of the 5S RNP into the ribosomal large subunit during ribosome biogenesis. In ribosome biogenesis, may also play a role in rRNA transcription. Also functions as a nucleolar sensor that regulates the activation of p53/TP53 in response to ribosome biogenesis perturbation, DNA damage and other stress conditions. DNA damage or perturbation of ribosome biogenesis disrupt the interaction between NOP53 and RPL11 allowing RPL11 transport to the nucleoplasm where it can inhibit MDM2 and allow p53/TP53 activation. It may also positively regulate the function of p53/TP53 in cell cycle arrest and apoptosis through direct interaction, preventing its MDM2-dependent ubiquitin-mediated proteasomal degradation. Originally identified as a tumor suppressor, it may also play a role in cell proliferation and apoptosis by positively regulating the stability of PTEN, thereby antagonizing the PI3K-AKT/PKB signaling pathway. May also inhibit cell proliferation and increase apoptosis through its interaction with NF2. May negatively regulate NPM1 by regulating its nucleoplasmic localization, oligomerization and ubiquitin-mediated proteasomal degradation. Thereby, may prevent NPM1 interaction with MYC and negatively regulate transcription mediated by the MYC-NPM1 complex. May also regulate cellular aerobic respiration. In the cellular response to viral infection, may play a role in the attenuation of interferon-beta through the inhibition of RIGI. This Homo sapiens (Human) protein is Ribosome biogenesis protein NOP53.